Reading from the N-terminus, the 227-residue chain is Large ribosomal subunit protein uL3 (227 aa).

At glutamine 151 the chain carries N5-methylglutamine.

This sequence belongs to the universal ribosomal protein uL3 family. Part of the 50S ribosomal subunit. Forms a cluster with proteins L14 and L19. Post-translationally, methylated by PrmB.

Functionally, one of the primary rRNA binding proteins, it binds directly near the 3'-end of the 23S rRNA, where it nucleates assembly of the 50S subunit. The protein is Large ribosomal subunit protein uL3 of Gluconacetobacter diazotrophicus (strain ATCC 49037 / DSM 5601 / CCUG 37298 / CIP 103539 / LMG 7603 / PAl5).